The sequence spans 365 residues: DNA replication and repair protein RecF (365 aa).

Residue 30 to 37 (GENGQGKT) participates in ATP binding.

The protein belongs to the RecF family.

The protein resides in the cytoplasm. In terms of biological role, the RecF protein is involved in DNA metabolism; it is required for DNA replication and normal SOS inducibility. RecF binds preferentially to single-stranded, linear DNA. It also seems to bind ATP. This is DNA replication and repair protein RecF from Desulfitobacterium hafniense (strain DSM 10664 / DCB-2).